The following is a 384-amino-acid chain: Involucrin (384 aa).

The segment at 1–384 (MSQQHTLPVT…LPEQPQEPEV (384 aa)) is disordered. Composition is skewed to basic and acidic residues over residues 56–65 (PSKHEEKGTD) and 80–134 (PELH…ELHL). Positions 137 to 146 (QQQQESQEQE) are enriched in low complexity. The segment covering 179–208 (KQREPQESQEQRLHLGKEQESQEQRLHLGE) has biased composition (basic and acidic residues). Low complexity predominate over residues 239 to 267 (PEQRLQLLPQGPQEQELHLGKQQQQQESQ). 2 stretches are compositionally biased toward basic and acidic residues: residues 268-308 (QHQE…KKLL) and 315-336 (EAVK…KEQL).

Belongs to the involucrin family. As to quaternary structure, directly or indirectly cross-linked to cornifelin (CNFN). Substrate of transglutaminase. Specific glutamines or lysines are cross-linked to keratins, desmoplakin and to inter involucrin molecules. As to expression, keratinocytes of epidermis and other stratified squamous epithelia.

It is found in the cytoplasm. Functionally, part of the insoluble cornified cell envelope (CE) of stratified squamous epithelia. The sequence is that of Involucrin (IVL) from Otolemur crassicaudatus (Brown greater galago).